The following is a 384-amino-acid chain: 8-amino-7-oxononanoate synthase (384 aa).

Arginine 21 contributes to the substrate binding site. A pyridoxal 5'-phosphate-binding site is contributed by 108 to 109 (GF). Histidine 133 contributes to the substrate binding site. Residues serine 179, histidine 207, and threonine 233 each coordinate pyridoxal 5'-phosphate. Lysine 236 carries the N6-(pyridoxal phosphate)lysine modification. Position 352 (threonine 352) interacts with substrate.

The protein belongs to the class-II pyridoxal-phosphate-dependent aminotransferase family. BioF subfamily. Homodimer. Requires pyridoxal 5'-phosphate as cofactor.

It carries out the reaction 6-carboxyhexanoyl-[ACP] + L-alanine + H(+) = (8S)-8-amino-7-oxononanoate + holo-[ACP] + CO2. It functions in the pathway cofactor biosynthesis; biotin biosynthesis. In terms of biological role, catalyzes the decarboxylative condensation of pimeloyl-[acyl-carrier protein] and L-alanine to produce 8-amino-7-oxononanoate (AON), [acyl-carrier protein], and carbon dioxide. This chain is 8-amino-7-oxononanoate synthase, found in Escherichia coli O157:H7.